Here is a 280-residue protein sequence, read N- to C-terminus: MFVRVMKIAQNKKIVTVYPTTTIRKALMTMNENKYRRLPVVNAGNNKVVGIITSMDIVDFMGGGSKYNLIREKHERNFLAAINEPVREIMEENVITLKENADIDEAIETFLTKNVGGAPIVNDENQLISLITERDVIRALLDKIDENEVIDDYITRDVIVATPGERLKDVARTMVRNGFRRLPVVSEGRLVGIITSTDFIKLLGSDWAFNHMQTGNVREITNVRMEEIMKRDVITAKEGDKLKKIAEIMVTNDIGALPVVDENLRIKGIITEKDVLKYFA.

CBS domains follow at residues glutamine 10–tyrosine 67, methionine 90–glutamate 146, isoleucine 154–phenylalanine 209, and methionine 229–alanine 280.

This is an uncharacterized protein from Methanocaldococcus jannaschii (strain ATCC 43067 / DSM 2661 / JAL-1 / JCM 10045 / NBRC 100440) (Methanococcus jannaschii).